We begin with the raw amino-acid sequence, 212 residues long: Peroxisomal membrane protein 4 (212 aa).

Helical transmembrane passes span 97 to 117 (GGTH…LLFG) and 151 to 171 (LKWD…LWLF). Asparagine 206 carries N-linked (GlcNAc...) asparagine glycosylation.

The protein belongs to the peroxisomal membrane protein PXMP2/4 family. As to quaternary structure, interacts with PEX19. Liver.

The protein localises to the peroxisome membrane. This chain is Peroxisomal membrane protein 4 (Pxmp4), found in Rattus norvegicus (Rat).